Here is a 174-residue protein sequence, read N- to C-terminus: Ribosome maturation factor RimP (174 aa).

This sequence belongs to the RimP family.

Its subcellular location is the cytoplasm. Required for maturation of 30S ribosomal subunits. This is Ribosome maturation factor RimP from Bdellovibrio bacteriovorus (strain ATCC 15356 / DSM 50701 / NCIMB 9529 / HD100).